A 118-amino-acid polypeptide reads, in one-letter code: Large ribosomal subunit protein bL20 (118 aa).

Belongs to the bacterial ribosomal protein bL20 family.

Binds directly to 23S ribosomal RNA and is necessary for the in vitro assembly process of the 50S ribosomal subunit. It is not involved in the protein synthesizing functions of that subunit. In Klebsiella pneumoniae (strain 342), this protein is Large ribosomal subunit protein bL20.